Here is a 339-residue protein sequence, read N- to C-terminus: D-alanine--D-alanine ligase (339 aa).

One can recognise an ATP-grasp domain in the interval 126–333 (KQVLDSAGIP…YSELVTRLVE (208 aa)). 158 to 213 (AAELGYPLFVKPANLGSSVGISKVGSPEELDAALTLAFGLDRRVILEAMTPHKPRE) serves as a coordination point for ATP. Mg(2+) is bound by residues aspartate 286, glutamate 300, and asparagine 302.

Belongs to the D-alanine--D-alanine ligase family. Mg(2+) is required as a cofactor. Mn(2+) serves as cofactor.

It localises to the cytoplasm. It carries out the reaction 2 D-alanine + ATP = D-alanyl-D-alanine + ADP + phosphate + H(+). The protein operates within cell wall biogenesis; peptidoglycan biosynthesis. Its function is as follows. Cell wall formation. This is D-alanine--D-alanine ligase from Deinococcus radiodurans (strain ATCC 13939 / DSM 20539 / JCM 16871 / CCUG 27074 / LMG 4051 / NBRC 15346 / NCIMB 9279 / VKM B-1422 / R1).